We begin with the raw amino-acid sequence, 58 residues long: Basic phospholipase A2 homolog PocTX (58 aa).

A disulfide bridge links Cys-29 with Cys-45.

As to expression, expressed by the venom gland.

The protein localises to the secreted. In terms of biological role, wasp venom phospholipase A2 homolog that lacks enzymatic activity. This Polybia occidentalis (Paper wasp) protein is Basic phospholipase A2 homolog PocTX.